The following is a 453-amino-acid chain: Bifunctional protein GlmU (453 aa).

Residues 1-225 (MNIVILAAGT…EWETLGVNSK (225 aa)) form a pyrophosphorylase region. Residues 6–9 (LAAG), Lys20, Gln71, 76–77 (GT), 98–100 (YGD), Gly135, Glu150, Asn165, and Asn223 contribute to the UDP-N-acetyl-alpha-D-glucosamine site. Position 100 (Asp100) interacts with Mg(2+). Position 223 (Asn223) interacts with Mg(2+). Positions 226 to 246 (AQLAELERIHQRNLADALLAA) are linker. The tract at residues 247–453 (GVTLADPARI…GYVRPVKKKS (207 aa)) is N-acetyltransferase. UDP-N-acetyl-alpha-D-glucosamine contacts are provided by Arg329 and Lys347. The Proton acceptor role is filled by His359. Residues Tyr362 and Asn373 each coordinate UDP-N-acetyl-alpha-D-glucosamine. Acetyl-CoA contacts are provided by residues Ala376, 382-383 (NY), Ser401, and Ala419.

This sequence in the N-terminal section; belongs to the N-acetylglucosamine-1-phosphate uridyltransferase family. In the C-terminal section; belongs to the transferase hexapeptide repeat family. In terms of assembly, homotrimer. Requires Mg(2+) as cofactor.

Its subcellular location is the cytoplasm. It carries out the reaction alpha-D-glucosamine 1-phosphate + acetyl-CoA = N-acetyl-alpha-D-glucosamine 1-phosphate + CoA + H(+). The enzyme catalyses N-acetyl-alpha-D-glucosamine 1-phosphate + UTP + H(+) = UDP-N-acetyl-alpha-D-glucosamine + diphosphate. It participates in nucleotide-sugar biosynthesis; UDP-N-acetyl-alpha-D-glucosamine biosynthesis; N-acetyl-alpha-D-glucosamine 1-phosphate from alpha-D-glucosamine 6-phosphate (route II): step 2/2. It functions in the pathway nucleotide-sugar biosynthesis; UDP-N-acetyl-alpha-D-glucosamine biosynthesis; UDP-N-acetyl-alpha-D-glucosamine from N-acetyl-alpha-D-glucosamine 1-phosphate: step 1/1. Its pathway is bacterial outer membrane biogenesis; LPS lipid A biosynthesis. Functionally, catalyzes the last two sequential reactions in the de novo biosynthetic pathway for UDP-N-acetylglucosamine (UDP-GlcNAc). The C-terminal domain catalyzes the transfer of acetyl group from acetyl coenzyme A to glucosamine-1-phosphate (GlcN-1-P) to produce N-acetylglucosamine-1-phosphate (GlcNAc-1-P), which is converted into UDP-GlcNAc by the transfer of uridine 5-monophosphate (from uridine 5-triphosphate), a reaction catalyzed by the N-terminal domain. The protein is Bifunctional protein GlmU of Burkholderia mallei (strain NCTC 10247).